We begin with the raw amino-acid sequence, 475 residues long: CAAX prenyl protease 1 homolog (475 aa).

Residues M1–R18 are Lumenal-facing. The helical transmembrane segment at I19–Q39 threads the bilayer. Topologically, residues R40–S81 are nuclear. Residues G82–W102 traverse the membrane as a helical segment. Residues R103–S123 lie on the Lumenal side of the membrane. The helical transmembrane segment at L124–Y144 threads the bilayer. Residues N145–K170 are Nuclear-facing. The chain crosses the membrane as a helical span at residues F171–I191. The Lumenal segment spans residues G192 to Y195. Residues F196 to A216 traverse the membrane as a helical segment. The Nuclear portion of the chain corresponds to D217–K347. H335 contacts Zn(2+). E336 is a catalytic residue. Position 339 (H339) interacts with Zn(2+). Residues N348–G368 form a helical membrane-spanning segment. Over R369–Q382 the chain is Lumenal. Residues P383–F405 traverse the membrane as a helical segment. The Nuclear segment spans residues C406 to H475. Residue E415 participates in Zn(2+) binding.

It belongs to the peptidase M48A family. It depends on Zn(2+) as a cofactor. Widely expressed. High levels in kidney, prostate, testis and ovary.

It is found in the endoplasmic reticulum membrane. The protein localises to the nucleus inner membrane. Its subcellular location is the early endosome membrane. The protein resides in the late endosome membrane. The enzyme catalyses Hydrolyzes the peptide bond -P2-(S-farnesyl or geranylgeranyl)C-P1'-P2'-P3'-COOH where P1' and P2' are amino acids with aliphatic side chains and P3' is any C-terminal residue.. In terms of biological role, transmembrane metalloprotease whose catalytic activity is critical for processing lamin A/LMNA on the inner nuclear membrane and clearing clogged translocons on the endoplasmic reticulum. Proteolytically removes the C-terminal three residues of farnesylated proteins. Also plays an antiviral role independently of its protease activity by restricting enveloped RNA and DNA viruses, including influenza A, Zika, Ebola, Sindbis, vesicular stomatitis, cowpox, and vaccinia. Mechanistically, controls IFITM antiviral pathway to hinder viruses from breaching the endosomal barrier by modulating membrane fluidity. This is CAAX prenyl protease 1 homolog from Homo sapiens (Human).